The following is a 362-amino-acid chain: 3-dehydroquinate synthase (362 aa).

Residues 71-76, 105-109, 129-130, K142, K151, and 169-172 contribute to the NAD(+) site; these read DGEQYK, GVVGD, TT, and CLKT. The Zn(2+) site is built by E184, H247, and H264.

This sequence belongs to the sugar phosphate cyclases superfamily. Dehydroquinate synthase family. Co(2+) serves as cofactor. The cofactor is Zn(2+). It depends on NAD(+) as a cofactor.

Its subcellular location is the cytoplasm. It carries out the reaction 7-phospho-2-dehydro-3-deoxy-D-arabino-heptonate = 3-dehydroquinate + phosphate. Its pathway is metabolic intermediate biosynthesis; chorismate biosynthesis; chorismate from D-erythrose 4-phosphate and phosphoenolpyruvate: step 2/7. Functionally, catalyzes the conversion of 3-deoxy-D-arabino-heptulosonate 7-phosphate (DAHP) to dehydroquinate (DHQ). In Escherichia coli O127:H6 (strain E2348/69 / EPEC), this protein is 3-dehydroquinate synthase.